The sequence spans 231 residues: 5'-methylthioadenosine/S-adenosylhomocysteine nucleosidase (231 aa).

The active-site Proton acceptor is glutamate 12. Residues glycine 78, methionine 153, and methionine 174–glutamate 175 each bind substrate. Aspartate 198 (proton donor) is an active-site residue.

Belongs to the PNP/UDP phosphorylase family. MtnN subfamily.

The catalysed reaction is S-adenosyl-L-homocysteine + H2O = S-(5-deoxy-D-ribos-5-yl)-L-homocysteine + adenine. It catalyses the reaction S-methyl-5'-thioadenosine + H2O = 5-(methylsulfanyl)-D-ribose + adenine. The enzyme catalyses 5'-deoxyadenosine + H2O = 5-deoxy-D-ribose + adenine. It functions in the pathway amino-acid biosynthesis; L-methionine biosynthesis via salvage pathway; S-methyl-5-thio-alpha-D-ribose 1-phosphate from S-methyl-5'-thioadenosine (hydrolase route): step 1/2. Catalyzes the irreversible cleavage of the glycosidic bond in both 5'-methylthioadenosine (MTA) and S-adenosylhomocysteine (SAH/AdoHcy) to adenine and the corresponding thioribose, 5'-methylthioribose and S-ribosylhomocysteine, respectively. Also cleaves 5'-deoxyadenosine, a toxic by-product of radical S-adenosylmethionine (SAM) enzymes, into 5-deoxyribose and adenine. This is 5'-methylthioadenosine/S-adenosylhomocysteine nucleosidase from Bacillus cytotoxicus (strain DSM 22905 / CIP 110041 / 391-98 / NVH 391-98).